Consider the following 223-residue polypeptide: Deoxyribose-phosphate aldolase (223 aa).

Aspartate 89 (proton donor/acceptor) is an active-site residue. Lysine 152 (schiff-base intermediate with acetaldehyde) is an active-site residue. Catalysis depends on lysine 181, which acts as the Proton donor/acceptor.

Belongs to the DeoC/FbaB aldolase family. DeoC type 1 subfamily.

The protein localises to the cytoplasm. It carries out the reaction 2-deoxy-D-ribose 5-phosphate = D-glyceraldehyde 3-phosphate + acetaldehyde. Its pathway is carbohydrate degradation; 2-deoxy-D-ribose 1-phosphate degradation; D-glyceraldehyde 3-phosphate and acetaldehyde from 2-deoxy-alpha-D-ribose 1-phosphate: step 2/2. Catalyzes a reversible aldol reaction between acetaldehyde and D-glyceraldehyde 3-phosphate to generate 2-deoxy-D-ribose 5-phosphate. The chain is Deoxyribose-phosphate aldolase from Listeria innocua serovar 6a (strain ATCC BAA-680 / CLIP 11262).